We begin with the raw amino-acid sequence, 155 residues long: Nascent polypeptide-associated complex subunit beta (155 aa).

2 disordered regions span residues 1-35 (MDQAKLARMQQSVRIGGKGTPRRKVKKVHKSSGAD) and 116-155 (LAESYQNMQKNQAGADGKKDDEEDDIPDLVEGENFESNVE). Basic residues predominate over residues 20–30 (TPRRKVKKVHK). Positions 33 to 98 (GADDKKLQAT…GEEKELTELV (66 aa)) constitute an NAC-A/B domain. Positions 136 to 155 (DEEDDIPDLVEGENFESNVE) are enriched in acidic residues.

Belongs to the NAC-beta family. As to quaternary structure, part of the nascent polypeptide-associated complex (NAC), consisting of egd2 and egd1. NAC associates with ribosomes via egd1.

Its subcellular location is the cytoplasm. The protein localises to the nucleus. Component of the nascent polypeptide-associated complex (NAC), a dynamic component of the ribosomal exit tunnel, protecting the emerging polypeptides from interaction with other cytoplasmic proteins to ensure appropriate nascent protein targeting. The NAC complex also promotes mitochondrial protein import by enhancing productive ribosome interactions with the outer mitochondrial membrane and blocks the inappropriate interaction of ribosomes translating non-secretory nascent polypeptides with translocation sites in the membrane of the endoplasmic reticulum. EGD1 may act as a transcription factor that exert a negative effect on the expression of several genes that are transcribed by RNA polymerase II. This chain is Nascent polypeptide-associated complex subunit beta (egd1), found in Aspergillus niger (strain ATCC MYA-4892 / CBS 513.88 / FGSC A1513).